Consider the following 249-residue polypeptide: NAD kinase (249 aa).

Asp-49 (proton acceptor) is an active-site residue. Residues 49–50 (DG), Arg-54, 115–116 (NE), Lys-126, Arg-143, Asp-145, Ile-153, 156–161 (TGYAFS), Ala-180, and Gln-211 contribute to the NAD(+) site.

The protein belongs to the NAD kinase family. Homotetramer. The cofactor is a divalent metal cation.

The protein localises to the cytoplasm. The catalysed reaction is NAD(+) + ATP = ADP + NADP(+) + H(+). Functionally, involved in the regulation of the intracellular balance between NAD(H) and NADP(H), and is a key enzyme in the biosynthesis of NADP. Catalyzes specifically the phosphorylation on 2'-hydroxyl of the adenosine moiety of NAD to yield NADP. The protein is NAD kinase of Archaeoglobus fulgidus (strain ATCC 49558 / DSM 4304 / JCM 9628 / NBRC 100126 / VC-16).